The chain runs to 50 residues: MEKTGLPLSLESFQQLLPQIFMRAKGRSIRLIGLHVNLPEENKQEQMSLW.

This is an uncharacterized protein from Haemophilus influenzae (strain ATCC 51907 / DSM 11121 / KW20 / Rd).